A 72-amino-acid polypeptide reads, in one-letter code: MAQRDTGGGQQRTGRRDDETAEAEVEESGASDLKERHEKLSEDVDSLLDEIDDVLEENAEEFVKGYVQKGGQ.

Gly residues predominate over residues 1–11; that stretch reads MAQRDTGGGQQ. Residues 1 to 41 form a disordered region; the sequence is MAQRDTGGGQQRTGRRDDETAEAEVEESGASDLKERHEKLS. Positions 19–29 are enriched in acidic residues; sequence ETAEAEVEESG. Residues 22–61 are a coiled coil; the sequence is EAEVEESGASDLKERHEKLSEDVDSLLDEIDDVLEENAEE. The interval 28–66 is ARC ATPase binding; sequence SGASDLKERHEKLSEDVDSLLDEIDDVLEENAEEFVKGY. Positions 32–41 are enriched in basic and acidic residues; the sequence is DLKERHEKLS. Q72 is subject to Deamidated glutamine. Residue Q72 forms an Isoglutamyl lysine isopeptide (Gln-Lys) (interchain with K-? in acceptor proteins) linkage.

It belongs to the prokaryotic ubiquitin-like protein family. Strongly interacts with the proteasome-associated ATPase ARC through a hydrophobic interface; the interacting region of Pup lies in its C-terminal half. There is one Pup binding site per ARC hexamer ring. Post-translationally, is modified by deamidation of its C-terminal glutamine to glutamate by the deamidase Dop, a prerequisite to the subsequent pupylation process.

The protein operates within protein degradation; proteasomal Pup-dependent pathway. Protein modifier that is covalently attached to lysine residues of substrate proteins, thereby targeting them for proteasomal degradation. The tagging system is termed pupylation. The polypeptide is Prokaryotic ubiquitin-like protein Pup (Parafrankia sp. (strain EAN1pec)).